The sequence spans 532 residues: MITINTYALQKRRTFAIISHPDAGKTTLTEKFLLNGKIIRTSGTIKARRSKKYAKSDWMEIEKKKGISITTSVIQIPYNRYLINILDTPGHQDFSEDTYRVLTAVDFCVMIVDAAKGVEERTRKLIHVARTHRTPIITFINKLDRNSLDPIEILDQLEIELKIKCSPIIWPISCGKAFKGIYHIYNNLVYFYSYKTSEGINDTNNFLLKTCCLNDVFLDKIIGLELAQEFREEVELVNSIYKAFNKRIFLESDLTPIFFGSALKNFGVNFLMQGILDWAPSPVFKKSNIRKVQPYEKNFSGFVFKIQANMDLRHRDRMAFIRIVSGKYRKRMKLYHVRIKKYIIQTEVFSFVAGDRFIIETAYPGDIIGFHSYNSIKIGDTFTEGEKLKFFGIPNFAPELFRLVSLVDPFHKKKLLKGLTQLSEEGAIQVFKPYENNELILGAIGSLQFDIVIERLKIEYNIFILVHKVNIFSIRWISSNSLDTLSTFKNQNKSCLALDINNHLVYLASSEINLRLVQSRYPDIIFNVTCEN.

Residues 10–283 enclose the tr-type G domain; it reads QKRRTFAIIS…GILDWAPSPV (274 aa). Residues 19–26, 87–91, and 141–144 contribute to the GTP site; these read SHPDAGKT, DTPGH, and NKLD.

It belongs to the TRAFAC class translation factor GTPase superfamily. Classic translation factor GTPase family. PrfC subfamily.

It localises to the cytoplasm. Its function is as follows. Increases the formation of ribosomal termination complexes and stimulates activities of RF-1 and RF-2. It binds guanine nucleotides and has strong preference for UGA stop codons. It may interact directly with the ribosome. The stimulation of RF-1 and RF-2 is significantly reduced by GTP and GDP, but not by GMP. The protein is Peptide chain release factor 3 (prfC) of Buchnera aphidicola subsp. Baizongia pistaciae (strain Bp).